A 348-amino-acid chain; its full sequence is UPF0283 membrane protein PBPRA2435 (348 aa).

The next 3 membrane-spanning stretches (helical) occupy residues 71–91, 97–117, and 211–231; these read GLLIAGAAMTGWQTVDYVVSA, WLALGWSVIVAGIATMGITAL, and EAAVMVAMSPLAVADMLLVAW.

It belongs to the UPF0283 family.

The protein resides in the cell inner membrane. In Photobacterium profundum (strain SS9), this protein is UPF0283 membrane protein PBPRA2435.